We begin with the raw amino-acid sequence, 428 residues long: Glial fibrillary acidic protein (428 aa).

Residues 1-68 (MERRRVTSAT…KETRASERAE (68 aa)) are head. Residue Thr-7 is modified to Phosphothreonine; by AURKB and ROCK1. Residue Arg-12 is modified to Omega-N-methylarginine. Ser-13 is modified (phosphoserine; by AURKB and ROCK1). Citrulline occurs at positions 26 and 32. Residue Ser-34 is modified to Phosphoserine; by AURKB and ROCK1. The region spanning 65–373 (ERAEMMELND…KLLEGEENRI (309 aa)) is the IF rod domain. The tract at residues 69–100 (MMELNDRFASYIEKVRFLEQQNKALAAELNQL) is coil 1A. Ser-78 bears the Phosphoserine mark. Positions 101–111 (RAKEPTKLADV) are linker 1. Residues Thr-106 and Thr-146 each carry the phosphothreonine modification. Residues 112–210 (YQAELRELRL…EEEVRELQEQ (99 aa)) form a coil 1B region. The tract at residues 211-226 (LAQQQVHVEMDVAKPD) is linker 12. Residues 227–248 (LTAALREIRTQYEAVASSNMHE) are coil 2A. Residues 249–252 (AEEW) form a linker 2 region. A coil 2B region spans residues 253 to 373 (YRSKFADLND…KLLEGEENRI (121 aa)). The residue at position 266 (Arg-266) is a Citrulline. Ser-319 is modified (phosphoserine). Positions 374–428 (TIPVQTFSNLQIRETSLDTKSVSEGHLKRNIVVKTVEMRDGEVIKESKQEHKDVM) are tail. Thr-379 is subject to Phosphothreonine. Residue Ser-381 is modified to Phosphoserine. Citrulline is present on residues Arg-402 and Arg-412.

It belongs to the intermediate filament family. In terms of assembly, interacts with SYNM. Post-translationally, phosphorylated by PKN1.

It localises to the cytoplasm. GFAP, a class-III intermediate filament, is a cell-specific marker that, during the development of the central nervous system, distinguishes astrocytes from other glial cells. The polypeptide is Glial fibrillary acidic protein (GFAP) (Bos taurus (Bovine)).